Consider the following 212-residue polypeptide: ER lumen protein-retaining receptor 1-B (212 aa).

At 1 to 4 the chain is on the lumenal side; that stretch reads MNIF. The chain crosses the membrane as a helical span at residues 5 to 24; sequence RFLGDISHLSAIIILLLKIW. Residues 25-32 lie on the Cytoplasmic side of the membrane; that stretch reads KSRSCAGI. Residues 33–52 form a helical membrane-spanning segment; that stretch reads SGKSQLLFAIVFTTRYLDLF. The interaction with the K-D-E-L motif on target proteins stretch occupies residues 47 to 48; the sequence is RY. Topologically, residues 53 to 58 are lumenal; it reads TNFISF. Residues 59-79 traverse the membrane as a helical segment; it reads YNTSMKVVYVASSYATVWMIY. The Cytoplasmic portion of the chain corresponds to 80-92; it reads SKFKATYDGNHDT. The chain crosses the membrane as a helical span at residues 93–110; the sequence is FRVEFLIVPTAILSFLVN. Residues 111–116 are Lumenal-facing; it reads HDFTPL. Residues 117 to 135 traverse the membrane as a helical segment; that stretch reads EILWTFSIYLESVAILPQL. At 136–149 the chain is on the cytoplasmic side; sequence FMVSKTGEAETITS. Residues 150–168 traverse the membrane as a helical segment; sequence HYLFALGIYRTLYLFNWIW. The interaction with the K-D-E-L motif on target proteins stretch occupies residues 159–169; it reads RTLYLFNWIWR. The Lumenal segment spans residues 169–178; it reads RYQFEEFFDL. Residues 179–199 form a helical membrane-spanning segment; the sequence is IAIVAGLVQTVLYCDFFYLYI. The Cytoplasmic segment spans residues 200-212; sequence TKVLKGKKLSLPA. An important for recycling of cargo proteins with the sequence motif K-D-E-L from the Golgi to the endoplasmic reticulum region spans residues 204–207; sequence KGKK.

It belongs to the ERD2 family.

It localises to the golgi apparatus membrane. Its subcellular location is the cytoplasmic vesicle. It is found in the COPI-coated vesicle membrane. The protein localises to the endoplasmic reticulum membrane. The protein resides in the endoplasmic reticulum-Golgi intermediate compartment membrane. Receptor for the C-terminal sequence motif K-D-E-L that is present on endoplasmic reticulum resident proteins and that mediates their recycling from the Golgi back to the endoplasmic reticulum. In Xenopus laevis (African clawed frog), this protein is ER lumen protein-retaining receptor 1-B (kdelr1-b).